The chain runs to 239 residues: Terpene cyclase idtB (239 aa).

The next 5 membrane-spanning stretches (helical) occupy residues 20 to 40, 50 to 70, 75 to 95, 113 to 133, and 138 to 158; these read MADTFVAGMGLGWIVNYALMI, CMALLPLCNNIAWELTYTIVY, RVELLVFAIGLTLNFFIMVGA, AGFILLVGTLLCFTGHVALAM, and GLAYSWGAVVCQLALSIGGLF. N-linked (GlcNAc...) asparagine glycosylation is present at Asn-164. The helical transmembrane segment at 197 to 217 threads the bilayer; that stretch reads EVFGWLASPLVLWSLVTFLLA.

This sequence belongs to the paxB family.

Its subcellular location is the membrane. The protein operates within secondary metabolite biosynthesis. Terpene cyclase; part of the gene cluster that mediates the biosynthesis of paspalitrems, indole-diterpene (IDT) mycotoxins that are potent tremorgens in mammals. The geranylgeranyl diphosphate (GGPP) synthase idtG is proposed to catalyze the first step in IDT biosynthesis via catalysis of a series of iterative condensations of isopentenyl diphosphate (IPP) with dimethylallyl diphosphate (DMAPP), geranyl diphosphate (GPP), and farnesyl diphosphate (FPP), to form GGPP. Condensation of indole-3-glycerol phosphate with GGPP by the prenyltransferase idtC then forms 3-geranylgeranylindole (3-GGI). Epoxidation of the two terminal alkenes of the geranylgeranyl moiety by the FAD-dependent monooxygenase idtM, and cyclization by the terpene cyclase idtB then leads to the production of paspaline. The cytochrome P450 monooxygenase idtP then catalyzes oxidative elimination of the pendant methyl group at C-12 of paspaline and generates the C-10 ketone to yield 13-desoxypaxilline. The cytochrome P450 monooxygenase idtQ may catalyze the C-13 oxidation of 13-desoxypaxilline to afford paxilline. Considering that both paspalicine and paxilline were detected in C.paspali, idtQ also catalyzes the formation of paspalinine from 13-desoxypaxilline via paspalicine as an intermediate. Finally, the alpha-prenyltransferase idtF prenylates paspalinine at the C-20 or the C-21 positions to yield paspalitrems A and C, respectively. The hydroxylation of paspalitrem A at C-32 by a still unknown oxidase affords paspalitrem B. This Claviceps paspali (Rye ergot fungus) protein is Terpene cyclase idtB.